The primary structure comprises 167 residues: Phosphorelay intermediate protein YPD1 (167 aa).

An HPt domain is found at 24-129 (DSDFSKGLII…DDEEIKIQVD (106 aa)). His64 is modified (phosphohistidine).

Belongs to the YPD1 family. In terms of assembly, interacts with the response regulatory domains of SLN1 and SSK1. The phosphorelay mechanism involves the sequential transfer of a phosphate group from 'His-576' (H1) to 'Asp-1144' (D1) of SLN1, then to His-64 (H2) of YPD1 and finally to 'Asp-554' (D2) of SSK1 or 'Asp-427' (D2) of SKN7.

The protein localises to the cytoplasm. It localises to the nucleus. In terms of biological role, phosphorelay intermediate protein that is part of the branched SLN1-YPD1-SKN7/SSK1 two-component regulatory system, which controls activity of the HOG1 pathway and gene expression in response to changes in the osmolarity of the extracellular environment. Catalyzes the phosphoryl group transfer from the membrane-bound osmosensing histidine kinase SLN1 to two distinct response regulator proteins, SSK1 in the cytoplasm, and transcription factor SKN7 in the nucleus. This Saccharomyces cerevisiae (strain ATCC 204508 / S288c) (Baker's yeast) protein is Phosphorelay intermediate protein YPD1 (YPD1).